Reading from the N-terminus, the 367-residue chain is MSQIHSFIPSNASPATLGISLILCGFIVYSVSKMFGYRTNHFPVEGRTIVVTGGSDGMGKAVACQLAEKGANVVIVARTVQKLREALEAIKGTAQDVKKQRFHYISADLTDAAECERVIAEVTEWNHGLAPDVVWCCAGYCEPGFFVETPVNTLRSQMDTVYWTAANTAHATLKSWLAPIPPSQQVPLPQRHLIFTCSTLAFVSIAGYAPYSPAKAAIRSLADTLSQEIEVYNGARAASSRNAAPPADVKIHTIFPMGILSPGFDNEQGLKPQLTKELEAADKPQRPIEVAKASIQGLEKGDYLITTMFVGHMMKASALGASPRNSIITDTLTSWLSSLVFLQVIPDLRKKAFNWGLKNGVPSSQSK.

Residues 12–32 (ASPATLGISLILCGFIVYSVS) traverse the membrane as a helical segment. NADPH is bound by residues Gly-53, Ser-55, Gly-57, Arg-78, Lys-82, Asp-108, and Leu-109. The GXSXG motif lies at 53–57 (GGSDG). The helical transmembrane segment at 193–213 (LIFTCSTLAFVSIAGYAPYSP) threads the bilayer. Catalysis depends on Tyr-211, which acts as the Proton acceptor. NADP(+)-binding residues include Tyr-211, Lys-215, and Ile-259. Lys-215 functions as the Lowers pKa of active site Tyr in the catalytic mechanism.

This sequence belongs to the short-chain dehydrogenases/reductases (SDR) family.

It is found in the endoplasmic reticulum membrane. The catalysed reaction is sphinganine + NADP(+) = 3-oxosphinganine + NADPH + H(+). It functions in the pathway lipid metabolism; sphingolipid metabolism. In terms of biological role, catalyzes the reduction of 3'-oxosphinganine (3-ketodihydrosphingosine/KDS) to sphinganine (dihydrosphingosine/DHS), the second step of de novo sphingolipid biosynthesis. The polypeptide is 3-ketodihydrosphingosine reductase ksrA (Aspergillus fumigatus (strain ATCC MYA-4609 / CBS 101355 / FGSC A1100 / Af293) (Neosartorya fumigata)).